The sequence spans 1534 residues: MDQDPRKDNPVEMDVDRDDSSQDPDDNESFKSALDEPLDLKELYQDALEKPSEEPSEELNDQVSTPAALTARAYQLEMFEASLKQNIIVALFSDRVMVADGHWQWQDSGRIWFLTPTVALARQQHRVLQSQIPSVKAIMLCGQDGVDSWSEQAVWDAVLLNVRIVVSTYQILFDANAHSFVRLDSLSLIVIDEAHNCSGSHPIARLMTEAYLPAKKAGLPVPSILGLTASPLKSNNLADIEKLEQVLDAVCRTPTIHREELLAHVNRPEMLVVSYGDSGTDPTPTDLMTRFLEAYHRLDISKDPDVLLLKAQRTERAREKLRQMITKKDTLAQKELRGVYNRALLVRREIGPWAADYYLTRTVSHMLAELERGEPPAQHRYIGEALRSIPIPAISKEPIQLSPKVQTLLKVLASHQQDPVGIVFVKERVMVSIVTHIISTHPLTKDRYRTASMIGTASVPGKARNHMDMTKKEDMTSLEGFRLGRFNLLVATSVLEEGIDVPICNLVICFDEPSNIKSFIQRRGRAREVSSTLYLMVQNASSESATDWHNLERLMKERYEDEMRQNAELELLDDPRIGSYPVLEVESTGARMTIRDARSHLNHFCAKVSSRSRYLQKEPYFVIRQVNPDPASPGRRTLLQATVHLPASLAPDLRRHESLWTWTSEKLAIMDASFQAYKALYNAGLVNENLLPTKVSDFLADLGDDPGHIWVKTQFDPWPEVAYAWQESSSLYSRRLTVLVPGVENPLEFEFILPVPVPYMAPLKLWWNATSALTLITSPEMQEFRKQEGTSAGPDHSYALLAMAFAHRFPIQGRQYPIRLVSTRRKLDVDGIAALEFDPRLYESSPQPPLVRLVDGRNMPYFVTKILPSKPPVELISKPSTDHADLPENVPYVVCKPIGKAVGQFIPLDAAQDQDSWTPKNGKLYRKVLPSTQIRMDNFPAVFAQVGAVIPAFTRAVEMSLVAADLMYNRLGCLQLDNLPLITTALISSGSRGPTNYERLEFIGDTILKFCACLTASALFPNHHERLLSQWKDKLVNNVRLCRASRDFGLDEYIINSAASKKWRPKFVEDYMDEMKSPISAETRQMSSKMVADVVESLIGAAYMCGGMSKALECVALLLPTPKSSQFKWQEIELSRTQLFEFAPKDAILSKQLEPLEKAMDYTFNKKSLLIEAMTHPSCAGLGTNESCYERLEFLGDAILDVIVVKRLMAETGPNELAHNDMHEHLSSVVTADIMAFLAMEWVIMQTDINEIDPTNLDALGLLPSSQSRITPASLVSNKEDWPFWRFMRHNSPQVGATQTATIERYLTLRDEIRDAIWKHNTLPWALLARMGPQKFYSDIVESLIGAVWVDSGSWKACEDVLTQMGLLPLLDHLLETKAHVMHPNVELQILAPPNKRATRTEFVIISNKRGIISSGTEFLDEPSAVDDGLVSVEPYDDTPEHDEVFSCKLFVGGKQVADVTGAATKEEARVRAAEKGCLVIKAERKVWNEAKAAAKEDKGHNTENGDANADNGQSGEKEEVPDCRDADGDTVMN.

Over residues 1-10 the composition is skewed to basic and acidic residues; the sequence is MDQDPRKDNP. The tract at residues 1–36 is disordered; it reads MDQDPRKDNPVEMDVDRDDSSQDPDDNESFKSALDE. Residues 11-27 show a composition bias toward acidic residues; it reads VEMDVDRDDSSQDPDDN. Positions 65-249 constitute a Helicase ATP-binding domain; the sequence is TPAALTARAY…IEKLEQVLDA (185 aa). Residue 78–85 participates in ATP binding; sequence MFEASLKQ. Positions 192 to 195 match the DEAH box motif; that stretch reads DEAH. The Helicase C-terminal domain maps to 404–575; the sequence is KVQTLLKVLA…NAELELLDDP (172 aa). Residues 597–700 form the Dicer dsRNA-binding fold domain; sequence ARSHLNHFCA…LPTKVSDFLA (104 aa). 2 consecutive RNase III domains span residues 959-1107 and 1153-1353; these read MSLV…MCGG and LEPL…VDSG. Positions 1193, 1339, and 1342 each coordinate Mg(2+). Residues 1383–1483 form the DRBM domain; the sequence is HPNVELQILA…AEKGCLVIKA (101 aa). Residues 1492 to 1504 are compositionally biased toward basic and acidic residues; it reads KAAAKEDKGHNTE. Positions 1492–1534 are disordered; that stretch reads KAAAKEDKGHNTENGDANADNGQSGEKEEVPDCRDADGDTVMN. Over residues 1505–1515 the composition is skewed to polar residues; sequence NGDANADNGQS. Residues 1516–1528 show a composition bias toward basic and acidic residues; it reads GEKEEVPDCRDAD.

Belongs to the helicase family. Dicer subfamily. Requires Mg(2+) as cofactor. The cofactor is Mn(2+).

Dicer-like endonuclease involved in cleaving double-stranded RNA in the RNA interference (RNAi) pathway. Produces 21 to 25 bp dsRNAs (siRNAs) which target the selective destruction of homologous RNAs leading to sequence-specific suppression of gene expression, called post-transcriptional gene silencing (PTGS). Part of a broad host defense response against viral infection and transposons. Controls the expression of the non-LTR retrotransposon Tad in the African strain, Adiomopoume. The sequence is that of Dicer-like protein 2 (dcl-2) from Neurospora crassa (strain ATCC 24698 / 74-OR23-1A / CBS 708.71 / DSM 1257 / FGSC 987).